The sequence spans 159 residues: Ribosomal RNA large subunit methyltransferase H (159 aa).

Positions 76 and 108 each coordinate S-adenosyl-L-methionine.

The protein belongs to the RNA methyltransferase RlmH family. As to quaternary structure, homodimer.

It localises to the cytoplasm. The catalysed reaction is pseudouridine(1915) in 23S rRNA + S-adenosyl-L-methionine = N(3)-methylpseudouridine(1915) in 23S rRNA + S-adenosyl-L-homocysteine + H(+). In terms of biological role, specifically methylates the pseudouridine at position 1915 (m3Psi1915) in 23S rRNA. This chain is Ribosomal RNA large subunit methyltransferase H, found in Ligilactobacillus salivarius (strain UCC118) (Lactobacillus salivarius).